The chain runs to 249 residues: Triosephosphate isomerase (249 aa).

Residue 9 to 11 (NWK) coordinates substrate. Catalysis depends on histidine 94, which acts as the Electrophile. Glutamate 166 functions as the Proton acceptor in the catalytic mechanism. Residues glycine 172, serine 211, and 232-233 (GG) each bind substrate.

Belongs to the triosephosphate isomerase family. Homodimer.

Its subcellular location is the cytoplasm. The catalysed reaction is D-glyceraldehyde 3-phosphate = dihydroxyacetone phosphate. The protein operates within carbohydrate biosynthesis; gluconeogenesis. Its pathway is carbohydrate degradation; glycolysis; D-glyceraldehyde 3-phosphate from glycerone phosphate: step 1/1. Its function is as follows. Involved in the gluconeogenesis. Catalyzes stereospecifically the conversion of dihydroxyacetone phosphate (DHAP) to D-glyceraldehyde-3-phosphate (G3P). The sequence is that of Triosephosphate isomerase from Dechloromonas aromatica (strain RCB).